Here is a 156-residue protein sequence, read N- to C-terminus: 16 kDa phloem protein 1 (156 aa).

Residues 1–108 (MAVGILEVSL…LEMGVEKGTA (108 aa)) form the C2 domain. Ca(2+) is bound by residues D20, D26, D78, D80, S83, and D86.

Ca(2+) serves as cofactor.

Its function is as follows. Binds to both sense and antisense RNA. Can also bind sheared DNA and dodecamer DNA with a low affinity. Interacts with mesophyll plasmodesmata to mediate its own cell-to-cell transport and potentiate RNA trafficking. May play a role in plant defense signaling. This is 16 kDa phloem protein 1 from Arabidopsis thaliana (Mouse-ear cress).